The sequence spans 342 residues: Oxygen-dependent coproporphyrinogen-III oxidase (342 aa).

Serine 98 is a binding site for substrate. 2 residues coordinate a divalent metal cation: histidine 102 and histidine 112. Histidine 112 acts as the Proton donor in catalysis. 114-116 (NYR) is a substrate binding site. Residues histidine 146 and histidine 176 each contribute to the a divalent metal cation site. The tract at residues 266-301 (YVEFNLVWDRGTIFGLQTNGRTESILMSLPPLARWE) is important for dimerization.

Belongs to the aerobic coproporphyrinogen-III oxidase family. As to quaternary structure, homodimer. It depends on a divalent metal cation as a cofactor.

The protein localises to the cytoplasm. It carries out the reaction coproporphyrinogen III + O2 + 2 H(+) = protoporphyrinogen IX + 2 CO2 + 2 H2O. Its pathway is porphyrin-containing compound metabolism; protoporphyrin-IX biosynthesis; protoporphyrinogen-IX from coproporphyrinogen-III (O2 route): step 1/1. Its function is as follows. Involved in the heme and chlorophyll biosynthesis. Catalyzes the aerobic oxidative decarboxylation of propionate groups of rings A and B of coproporphyrinogen-III to yield the vinyl groups in protoporphyrinogen-IX. This Prochlorococcus marinus (strain AS9601) protein is Oxygen-dependent coproporphyrinogen-III oxidase.